The chain runs to 897 residues: Translation initiation factor IF-2 (897 aa).

The tr-type G domain occupies 402-570; the sequence is NRAPIVTIMG…SILVQSEILE (169 aa). Positions 411–418 are G1; the sequence is GHVDHGKT. 411–418 contacts GTP; the sequence is GHVDHGKT. Residues 436-440 are G2; sequence GITQN. The segment at 458-461 is G3; the sequence is DTPG. GTP contacts are provided by residues 458-462 and 512-515; these read DTPGH and NKID. The segment at 512 to 515 is G4; that stretch reads NKID. The G5 stretch occupies residues 548–550; the sequence is SAV.

This sequence belongs to the TRAFAC class translation factor GTPase superfamily. Classic translation factor GTPase family. IF-2 subfamily.

The protein localises to the cytoplasm. Functionally, one of the essential components for the initiation of protein synthesis. Protects formylmethionyl-tRNA from spontaneous hydrolysis and promotes its binding to the 30S ribosomal subunits. Also involved in the hydrolysis of GTP during the formation of the 70S ribosomal complex. The sequence is that of Translation initiation factor IF-2 from Blochmanniella floridana.